Consider the following 275-residue polypeptide: Nitrate import permease protein NrtB (275 aa).

7 helical membrane-spanning segments follow: residues 25–45 (VIRP…LCSG), 89–109 (VAVG…LIGS), 120–140 (IFQV…LAAL), 147–167 (AIFV…TVGA), 189–209 (FFNI…RIGI), 213–233 (WLAI…FFIW), and 238–258 (SSLI…GLLL). Residues 82-262 (IFASLTRVAV…IVGLLLDRFI (181 aa)) enclose the ABC transmembrane type-1 domain.

Belongs to the binding-protein-dependent transport system permease family. CysTW subfamily. As to quaternary structure, the complex is composed of two ATP-binding proteins (NrtC and NrtD), two transmembrane proteins (NrtB) and a solute-binding protein (NrtA).

It localises to the cell inner membrane. In terms of biological role, part of the ABC transporter complex NrtABCD involved in nitrate uptake. The complex is probably also involved in nitrite transport. Probably responsible for the translocation of the substrate across the membrane. The protein is Nitrate import permease protein NrtB (nrtB) of Synechocystis sp. (strain ATCC 27184 / PCC 6803 / Kazusa).